The chain runs to 201 residues: Small ribosomal subunit protein uS4c (201 aa).

The interval 20-44 (GLTSKRPKAGSDLRNQSRSGKKSQY) is disordered. The S4 RNA-binding domain occupies 89 to 152 (MRLDNILFRL…NSRTLVQNLL (64 aa)).

It belongs to the universal ribosomal protein uS4 family. As to quaternary structure, part of the 30S ribosomal subunit. Contacts protein S5. The interaction surface between S4 and S5 is involved in control of translational fidelity.

The protein localises to the plastid. The protein resides in the chloroplast. One of the primary rRNA binding proteins, it binds directly to 16S rRNA where it nucleates assembly of the body of the 30S subunit. In terms of biological role, with S5 and S12 plays an important role in translational accuracy. The sequence is that of Small ribosomal subunit protein uS4c (rps4) from Barbarea verna (Land cress).